A 221-amino-acid polypeptide reads, in one-letter code: HTH-type transcriptional regulator McbR (221 aa).

The HTH gntR-type domain occupies 10–77 (VSLTLQVEND…PAQAFTVPEV (68 aa)). A DNA-binding region (H-T-H motif) is located at residues 37–56 (TKNLAEQLGMSITPVREALL).

Functionally, important for biofilm formation. Represses expression of McbA by binding to its promoter region, which prevents colanic acid overproduction and mucoidy. The sequence is that of HTH-type transcriptional regulator McbR (mcbR) from Escherichia coli (strain K12).